Here is a 201-residue protein sequence, read N- to C-terminus: DNA polymerase epsilon subunit C (201 aa).

2 disordered regions span residues 102–165 (KKRE…KSTR) and 178–201 (SALDVGEHSDSSDIEVDHTKSTDP). Positions 117 to 144 (VVIEEPELHEDDGVEEEEEEDEVSEEEE) are enriched in acidic residues. Composition is skewed to basic and acidic residues over residues 145–164 (PVHNEELLDDSKDQQNDKST) and 182–201 (VGEHSDSSDIEVDHTKSTDP). A phosphoserine mark is found at serine 186, serine 188, and serine 189.

DNA polymerase epsilon is a heterotetramer consisting of POL2, DPB2, DPB3 and DPB4.

It localises to the nucleus. Functionally, as accessory component of the DNA polymerase epsilon (DNA polymerase II) participates in chromosomal DNA replication. It is required during synthesis of the leading and lagging DNA strands at the replication fork and binds at/or near replication origins and moves along DNA with the replication fork. It has 3'-5' proofreading exonuclease activity that correct errors arising during DNA replication. It is also involved in DNA synthesis during DNA repair. The chain is DNA polymerase epsilon subunit C (DPB3) from Saccharomyces cerevisiae (strain ATCC 204508 / S288c) (Baker's yeast).